The chain runs to 271 residues: 3-methyl-2-oxobutanoate hydroxymethyltransferase (271 aa).

2 residues coordinate Mg(2+): D44 and D83. Residues 44-45 (DS), D83, and K112 contribute to the 3-methyl-2-oxobutanoate site. E114 serves as a coordination point for Mg(2+). E181 functions as the Proton acceptor in the catalytic mechanism.

The protein belongs to the PanB family. As to quaternary structure, homodecamer; pentamer of dimers. Requires Mg(2+) as cofactor.

Its subcellular location is the cytoplasm. It carries out the reaction 3-methyl-2-oxobutanoate + (6R)-5,10-methylene-5,6,7,8-tetrahydrofolate + H2O = 2-dehydropantoate + (6S)-5,6,7,8-tetrahydrofolate. It functions in the pathway cofactor biosynthesis; coenzyme A biosynthesis. Its function is as follows. Catalyzes the reversible reaction in which hydroxymethyl group from 5,10-methylenetetrahydrofolate is transferred onto alpha-ketoisovalerate to form ketopantoate. This chain is 3-methyl-2-oxobutanoate hydroxymethyltransferase, found in Staphylothermus marinus (strain ATCC 43588 / DSM 3639 / JCM 9404 / F1).